We begin with the raw amino-acid sequence, 140 residues long: ATP synthase epsilon chain (140 aa).

Belongs to the ATPase epsilon chain family. F-type ATPases have 2 components, CF(1) - the catalytic core - and CF(0) - the membrane proton channel. CF(1) has five subunits: alpha(3), beta(3), gamma(1), delta(1), epsilon(1). CF(0) has three main subunits: a, b and c.

The protein localises to the cell membrane. Its function is as follows. Produces ATP from ADP in the presence of a proton gradient across the membrane. The chain is ATP synthase epsilon chain from Dehalococcoides mccartyi (strain ATCC BAA-2100 / JCM 16839 / KCTC 5957 / BAV1).